Reading from the N-terminus, the 207-residue chain is MSRETGAVCRMCRRSGDKLFLKGDKCVTKCVFEKRPKPPGPQLGRPRRLSDRGQQLRQKQSIRWSYGMTERQFRRFFGLANAQPGVTGDNMMILLERRLDNVLFRLGFGTSRAQARQIVMHGHILVNGQKTDIPSYLIKEGQEITVRETSKATAYFKTLAENIEAKAIPGWLSLDRKTLSGKVISLPNAGDIDARFDAQTVVEYYSR.

Positions 35 to 54 (RPKPPGPQLGRPRRLSDRGQ) are disordered. Residues 97 to 163 (RRLDNVLFRL…AYFKTLAENI (67 aa)) enclose the S4 RNA-binding domain.

The protein belongs to the universal ribosomal protein uS4 family. Part of the 30S ribosomal subunit. Contacts protein S5. The interaction surface between S4 and S5 is involved in control of translational fidelity.

Its function is as follows. One of the primary rRNA binding proteins, it binds directly to 16S rRNA where it nucleates assembly of the body of the 30S subunit. In terms of biological role, with S5 and S12 plays an important role in translational accuracy. The protein is Small ribosomal subunit protein uS4 of Dehalococcoides mccartyi (strain CBDB1).